Reading from the N-terminus, the 194-residue chain is Fimbrial protein 987P (194 aa).

The N-terminal stretch at Met-1–Ala-23 is a signal peptide. A disulfide bond links Cys-46 and Cys-85.

Belongs to the fimbrial protein family.

The protein localises to the fimbrium. In Escherichia coli, this protein is Fimbrial protein 987P (fasA).